Consider the following 84-residue polypeptide: Small ribosomal subunit protein uS17 (84 aa).

This sequence belongs to the universal ribosomal protein uS17 family. As to quaternary structure, part of the 30S ribosomal subunit.

Its function is as follows. One of the primary rRNA binding proteins, it binds specifically to the 5'-end of 16S ribosomal RNA. The chain is Small ribosomal subunit protein uS17 from Borrelia recurrentis (strain A1).